The primary structure comprises 210 residues: MNDSLLSNGHAPPLRQATVDRQTKETKVHVELTLDGNGLADNHTGIPFLNHMLDQLCAHGLVDLRVQASGDTHIDDHHTNEDVGITLGMALDQALGDRRGIQRFGHFVAPLDESLVEVALDFSGRPHLNYGLQIPTQRVGTYDTQLVREFFVALVNHSRMTLHIRQLDGMNSHHIIEATFKAFARALRMAIALDPRRAQQIPSSKGVIQA.

Positions 1 to 23 (MNDSLLSNGHAPPLRQATVDRQT) are disordered.

The protein belongs to the imidazoleglycerol-phosphate dehydratase family.

The protein localises to the cytoplasm. The catalysed reaction is D-erythro-1-(imidazol-4-yl)glycerol 3-phosphate = 3-(imidazol-4-yl)-2-oxopropyl phosphate + H2O. Its pathway is amino-acid biosynthesis; L-histidine biosynthesis; L-histidine from 5-phospho-alpha-D-ribose 1-diphosphate: step 6/9. In Thermosynechococcus vestitus (strain NIES-2133 / IAM M-273 / BP-1), this protein is Imidazoleglycerol-phosphate dehydratase.